The primary structure comprises 428 residues: Serine--tRNA ligase (428 aa).

235-237 (TAE) serves as a coordination point for L-serine. Residue 266–268 (RSE) participates in ATP binding. Glutamate 289 contacts L-serine. Residue 353 to 356 (EISS) coordinates ATP. Serine 389 contacts L-serine.

The protein belongs to the class-II aminoacyl-tRNA synthetase family. Type-1 seryl-tRNA synthetase subfamily. In terms of assembly, homodimer. The tRNA molecule binds across the dimer.

It localises to the cytoplasm. The catalysed reaction is tRNA(Ser) + L-serine + ATP = L-seryl-tRNA(Ser) + AMP + diphosphate + H(+). It catalyses the reaction tRNA(Sec) + L-serine + ATP = L-seryl-tRNA(Sec) + AMP + diphosphate + H(+). Its pathway is aminoacyl-tRNA biosynthesis; selenocysteinyl-tRNA(Sec) biosynthesis; L-seryl-tRNA(Sec) from L-serine and tRNA(Sec): step 1/1. Functionally, catalyzes the attachment of serine to tRNA(Ser). Is also able to aminoacylate tRNA(Sec) with serine, to form the misacylated tRNA L-seryl-tRNA(Sec), which will be further converted into selenocysteinyl-tRNA(Sec). This Pasteurella multocida (strain Pm70) protein is Serine--tRNA ligase.